Here is a 465-residue protein sequence, read N- to C-terminus: Iron transporter FTH1 (465 aa).

The Vacuolar portion of the chain corresponds to 1-11 (MAFEDYFSFQI). A helical membrane pass occupies residues 12–32 (FFIFLRESLEIVVIVSILLTI). Over 33-135 (VKQGLSVEDD…LYQKLKIQIL (103 aa)) the chain is Cytoplasmic. The interval 44 to 66 (PFEGSSSSAGLPSPNTNTNADST) is disordered. Residues 46–66 (EGSSSSAGLPSPNTNTNADST) are compositionally biased toward polar residues. A helical transmembrane segment spans residues 136-156 (AGGAFGLLLCMLIGGAFVSIF). At 157-170 (YHIGTDLWTLSEHY) the chain is on the vacuolar side. The chain crosses the membrane as a helical span at residues 171–191 (YEGVLSLVASVIISVMGLFFL). Topologically, residues 192–289 (RMGKLREKFR…FFFRYSSSLS (98 aa)) are cytoplasmic. The helical transmembrane segment at 290–310 (LKICLVVATCFLYLIAAGLFS) threads the bilayer. At 311-358 (KGVWQLELQDYVNKCNGQDMSEVGNGPGSYDISRSVWHVNCCNGEKDG) the chain is on the vacuolar side. A helical transmembrane segment spans residues 359–379 (GWMIFTAIFGWTNSATVGSVI). The Cytoplasmic segment spans residues 380–465 (SYNAYWLVLI…LIIDSSGSAN (86 aa)). The interval 433–465 (TSELNSSTSEPDSQRRSKDSSVPLIIDSSGSAN) is disordered. A phosphoserine mark is found at serine 449 and serine 453.

The protein belongs to the oxidase-dependent Fe transporter (OFeT) (TC 9.A.10.1) family. Interacts with FET5.

Its subcellular location is the vacuole membrane. In terms of biological role, high affinity iron transporter probably involved in transport of intravacuolar stores of iron. In Saccharomyces cerevisiae (strain ATCC 204508 / S288c) (Baker's yeast), this protein is Iron transporter FTH1 (FTH1).